We begin with the raw amino-acid sequence, 71 residues long: Mitochondrial import protein 1 (71 aa).

A helical membrane pass occupies residues 22 to 44 (YAAINLGLPFLNGVMLGFGEIFA).

This sequence belongs to the MIM1 family. In terms of assembly, component of the mitochondrial outer import machinery (MIM) complex containing at least mim1 and mim2. Interacts with mim2. Interacts with mitophagy receptor atg43.

It localises to the mitochondrion outer membrane. Its function is as follows. Component of the mitochondrial outer import machinery (MIM) complex that mediates transport of proteins into mitochondrial compartments. Promotes the insertion of tom70 into the outer mitochondrial membrane. Promotes the insertion of atg43 into the outer mitochondrial membrane. The MIM complex cooperates with the receptor tom70 in binding of precursor proteins and promotes their insertion and assembly into the outer membrane. Involved in import of the subset of proteins with multiple alpha-helical transmembrane segments. Required for the assembly of the TOM (translocase of outer membrane) receptor complex, which is responsible for the recognition and translocation of cytosolically synthesized mitochondrial preproteins. This is Mitochondrial import protein 1 from Schizosaccharomyces pombe (strain 972 / ATCC 24843) (Fission yeast).